The following is a 356-amino-acid chain: Cyanide hydratase (356 aa).

Residues 15–290 form the CN hydrolase domain; sequence FKVAAVQAEP…EVVLYANISL (276 aa). The Proton acceptor role is filled by glutamate 55. The active site involves lysine 137. The active-site Nucleophile is cysteine 172. Residues 331–356 form a disordered region; sequence DEQAASKAQQAEIDNAGKGSIVPSKL.

The protein belongs to the carbon-nitrogen hydrolase superfamily. Nitrilase family.

It carries out the reaction formamide = hydrogen cyanide + H2O. Functionally, catalyzes the hydration of cyanide to formamide. Degradation of cyanide may be important for plant pathogenic fungi in infection of cyanogenic plants. This is Cyanide hydratase from Armillaria gallica (Bulbous honey fungus).